A 519-amino-acid chain; its full sequence is Keratin, type II cytoskeletal 1b (519 aa).

The head stretch occupies residues 1-166 (MSRQFSSQSA…DPEIQKIKTQ (166 aa)). Omega-N-methylarginine occurs at positions 81 and 95. Residues 167 to 202 (EREQIKTLNNKFASFIDKVRFLEQQNQVLQTKWELL) form a coil 1A region. Residues 167 to 480 (EREQIKTLNN…ELLEGEESRM (314 aa)) form the IF rod domain. Residues 203–221 (QQVNTSTRTSSLEPIFEEF) form a linker 1 region. Residues 222-313 (INQLQRQVDV…YLFDTELSQI (92 aa)) are coil 1B. The linker 12 stretch occupies residues 314–337 (QTHVSDTNVILSMDNNRSLDLDSI). The coil 2 stretch occupies residues 338–476 (INAVRTQYEL…ATYRELLEGE (139 aa)). Positions 477–519 (ESRMSGALQSQVSIWALPSNEGNDLGERLHDPQSQVPVPKLGC) are tail. The interval 499 to 519 (NDLGERLHDPQSQVPVPKLGC) is disordered.

This sequence belongs to the intermediate filament family. In terms of processing, undergoes deimination of some arginine residues (citrullination).

This is Keratin, type II cytoskeletal 1b (Krt77) from Rattus norvegicus (Rat).